The sequence spans 431 residues: MRTVVWQSLSETQQDAILERPAITEGANITAAVAEVIAKVRAEGDAALFELTEKFDRIKPESIRVTEQEIEEASARLTAKMKQALEQAYANIAKFHNAQKPTPIKVETQPGVVCEQVTRPIQKVGLYIPGGSAPLPSTVLMLGVPAQIAGCRKVVLCSPPPIADEILYVAKLCNIDEVYNVGGGQAVAAMAYGTESVTKVDKIFGPGNAYVTEAKRQVSNDFRGAAIDMPAGPSEVLVIADETADADFIAADLLSQAEHGPDSQVVLVTPSVLIADQVTDAVQKQLKQLSRASIAEKALASSLIIIADSLTQAVSISNYYGPEHLIVQTKNPRELLPLLDNAGSIFLGDWSPESAGDYASGTNHVLPTYGYTRTYSSLGLADFSKRMTVQELSAEGLKNLAPTVVTMAEAEGLDAHKRAVTIRVEKLTARS.

NAD(+)-binding residues include Tyr-127, Gln-185, and Asn-208. Residues Ser-234, Gln-256, and His-259 each contribute to the substrate site. Zn(2+) contacts are provided by Gln-256 and His-259. Catalysis depends on proton acceptor residues Glu-323 and His-324. Residues His-324, Asp-357, Glu-411, and His-416 each coordinate substrate. Position 357 (Asp-357) interacts with Zn(2+). Zn(2+) is bound at residue His-416.

It belongs to the histidinol dehydrogenase family. Requires Zn(2+) as cofactor.

The catalysed reaction is L-histidinol + 2 NAD(+) + H2O = L-histidine + 2 NADH + 3 H(+). It participates in amino-acid biosynthesis; L-histidine biosynthesis; L-histidine from 5-phospho-alpha-D-ribose 1-diphosphate: step 9/9. Its function is as follows. Catalyzes the sequential NAD-dependent oxidations of L-histidinol to L-histidinaldehyde and then to L-histidine. The polypeptide is Histidinol dehydrogenase (Vibrio vulnificus (strain YJ016)).